Here is a 49-residue protein sequence, read N- to C-terminus: Large ribosomal subunit protein bL33A (49 aa).

Belongs to the bacterial ribosomal protein bL33 family.

This chain is Large ribosomal subunit protein bL33A, found in Levilactobacillus brevis (strain ATCC 367 / BCRC 12310 / CIP 105137 / JCM 1170 / LMG 11437 / NCIMB 947 / NCTC 947) (Lactobacillus brevis).